The following is a 444-amino-acid chain: 3-isopropylmalate dehydratase large subunit (444 aa).

[4Fe-4S] cluster-binding residues include Xaa348, Cys408, and Xaa411. Residues 423 to 444 (ERXXSHSNRNFEGRQGRGGRTH) are disordered.

This sequence belongs to the aconitase/IPM isomerase family. LeuC type 1 subfamily. Heterodimer of LeuC and LeuD. It depends on [4Fe-4S] cluster as a cofactor.

The enzyme catalyses (2R,3S)-3-isopropylmalate = (2S)-2-isopropylmalate. It participates in amino-acid biosynthesis; L-leucine biosynthesis; L-leucine from 3-methyl-2-oxobutanoate: step 2/4. In terms of biological role, catalyzes the isomerization between 2-isopropylmalate and 3-isopropylmalate, via the formation of 2-isopropylmaleate. This Buchnera aphidicola subsp. Uroleucon rudbeckiae protein is 3-isopropylmalate dehydratase large subunit.